The sequence spans 550 residues: Probable acyl-activating enzyme 6 (550 aa).

It belongs to the ATP-dependent AMP-binding enzyme family. In terms of tissue distribution, expressed at low levels in roots, leaves, stems and developing seeds.

Functionally, may act as an acid--thiol ligase that activates carboxylic acids by forming acyl-CoAs. The polypeptide is Probable acyl-activating enzyme 6 (AAE6) (Arabidopsis thaliana (Mouse-ear cress)).